The sequence spans 121 residues: Protein SNORC (121 aa).

The N-terminal stretch at 1–24 is a signal peptide; that stretch reads MASCLALRVALLLISGVLAPAVLT. Residues 25–92 lie on the Extracellular side of the membrane; that stretch reads AEGPQEPDPT…QDGGSLGPGA (68 aa). The interval 26-84 is disordered; that stretch reads EGPQEPDPTLWNEPIELPSGEGPLESTSHNQEFAVSGPPFPTSAPAPEDSTPPARVDQD. A helical transmembrane segment spans residues 93–113; sequence IAAIVIAALLATCVVLALVVV. The Cytoplasmic segment spans residues 114-121; that stretch reads ALRKFSAS.

As to quaternary structure, interacts (via the extracellular domain) with FGF2. Expressed only in cartilage, including nasal, knee epiphyseal and rib tissues. In proliferation and hypertrophic chondrocytes, detected intracellulary and in the pericellular extracellular matrix. In primary spongiosa, detected only in the extracellular matrix.

The protein localises to the membrane. It is found in the cytoplasm. The protein resides in the secreted. Its subcellular location is the extracellular space. It localises to the extracellular matrix. In terms of biological role, plays a role in the regulation of chondrocyte maturation and postnatal endochondral ossification. May inhibit cell growth stimulation induced by FGF2. The chain is Protein SNORC from Mus musculus (Mouse).